Reading from the N-terminus, the 260-residue chain is Multiple myeloma tumor-associated protein 2 homolog (260 aa).

Residues 1–11 are compositionally biased toward gly residues; sequence MFGSNRGGVRG. The tract at residues 1–21 is disordered; the sequence is MFGSNRGGVRGGQDQFNWEDV. Residues Lys-22, Lys-104, and Lys-113 each participate in a glycyl lysine isopeptide (Lys-Gly) (interchain with G-Cter in SUMO2) cross-link. The span at 106–116 shows a compositional bias: basic and acidic residues; that stretch reads EGGDPEEKGVD. 2 disordered regions span residues 106-133 and 146-260; these read EGGDPEEKGVDRLLGLGSASGSAGRVAL and SVFT…SSDD. The segment covering 117-132 has biased composition (low complexity); it reads RLLGLGSASGSAGRVA. A phosphoserine mark is found at Ser-123 and Ser-127. Over residues 170-182 the composition is skewed to basic and acidic residues; it reads RAEDKVEPDAESH. Residues 183-206 show a composition bias toward basic residues; it reads KKSKKEKKKKKKKHKKHKKKKDKE. 3 positions are modified to phosphoserine: Ser-215, Ser-216, and Ser-219.

The protein is Multiple myeloma tumor-associated protein 2 homolog (Mmtag2) of Mus musculus (Mouse).